A 755-amino-acid chain; its full sequence is MKKQRKILWRKGIHLAFSEKWNTGFGGFKKFYFHQHLCILKAKLGRPVTWNRQLRHFQGRKKALQIQKTWIKDEPLCAKTKFNVATQNVSTLSSKVKRKDAKHFISSSKTLLRLQAEKLLSSAKNSDHEYCREKNLLKAVTDFPSNSALGQANGHRPRTDPQPSDFPMKFNGESQSPGESGTIVVTLNNHKRKGFCYGCCQGPEHHRNGGPLIPKKFQLNQHRRIKLSPLMMYEKLSMIRFRYRILRSQHFRTKSKVCKLRKAQRSWVQKVTGDHQETRRENGEGGSCSPFPSPEPKDPSCRHQPYFPDMDSSAVVKGTNSHVPDCHTKGSSFLGKELSLDEAFPDQQNGSATNAWDQSSCSSPKWECTELIHDIPLPEHRSNTMFISETEREIMTLGQENQTSSVSDDRVKLSVSGADTSVSSVDGPVSQKAVQNENSYQMEEDGSLKQSILSSELLDHPYCKSPLEAPLVCSGLKLENQVGGGKNSQKASPVDDEQLSVCLSGFLDEVMKKYGSLVPLSEKEVLGRLKDVFNEDFSNRKPFINREITNYRARHQKCNFRIFYNKHMLDMDDLATLDGQNWLNDQVINMYGELIMDAVPDKVHFFNSFFHRQLVTKGYNGVKRWTKKVDLFKKSLLLIPIHLEVHWSLITVTLSNRIISFYDSQGIHFKFCVENIRKYLLTEAREKNRPEFLQGWQTAVTKCIPQQKNDSDCGVFVLQYCKCLALEQPFQFSQEDMPRVRKRIYKELCECRLMD.

The tract at residues 268–321 (VQKVTGDHQETRRENGEGGSCSPFPSPEPKDPSCRHQPYFPDMDSSAVVKGTNS) is disordered. A compositionally biased stretch (basic and acidic residues) spans 272–283 (TGDHQETRRENG). The segment at 567-724 (HMLDMDDLAT…VFVLQYCKCL (158 aa)) is protease. Residues H646, D663, and C713 contribute to the active site.

This sequence belongs to the peptidase C48 family. Interacts with CCAR2.

It is found in the nucleus. The protein localises to the nucleolus. In terms of biological role, protease that catalyzes two essential functions in the SUMO pathway: processing of full-length SUMO3 to its mature form and deconjugation of SUMO2 and SUMO3 from targeted proteins. Has weak proteolytic activity against full-length SUMO1 or SUMO1 conjugates. Required for cell division. The protein is Sentrin-specific protease 5 (SENP5) of Homo sapiens (Human).